The sequence spans 754 residues: MTILTHTLGFPRVGLRRELKKAQESYWAGNTTREALLTVGRELRARHWEQQKQAGIDLLPVGDFAWYDHVLTTSLLLGNVPARHQNNDGSVDIDTLFRIGRGRAPTGEPAAAAEMTKWFNTNYHYIVPEFSKGQQFRLTWTQLLEEVDEALALGHKIKPVLLGPVTYLWLGKVKGEPFDRLTLLKDILPVYQHVLAELAKRGIEWVQIDEPALVLELPQAWLDAFKPAYDALAGQVKLLLTTYFEGVTPNLDTIIALPVQGLHVDLIHGKDDVAELHQRLPVDWLLSAGLINGRNVWRADLTEKYAQINAIVGKRALWVASSCSLLHSPIDLSVETRLDTEVKSWFAFALQKCGELALLRDALNSGETAALEEWSAPIQARRHSRRVHNAAVEKRLAAITAQDSQRENPYEVRAEAQRARFKLPAWPTTTIGSFPQTTEIRGLRLDFKKGNLDANNYRTGIAEHIKQAIIEQERLGLDVLVHGEAERNDMVEYFGEHLDGFVFTQNGWVQSYGSRCVKPPVVIGDISRPAPITVEWAKYAQSLTDKPVKGMLTGPVTILCWSFPREDVTRETIAKQIALALRDEVADLEAAGIGIIQIDEPALREGLPLRRSDWDAYLEWGVEAFRINAAVAKDETQIHTHMCYCEFNDIMDSIAALDADVITIETSRSDMELLESFEAFDYPNEIGPGVYDIHSPNVPSVEWIEALLKKAAQRIPAQRLWVNPDCGLKTRGWPETRAALANMVKAAHNLRQAK.

Residues 17–20 and K117 each bind 5-methyltetrahydropteroyltri-L-glutamate; that span reads RELK. L-homocysteine contacts are provided by residues 431-433 and E484; that span reads IGS. Residues 431-433 and E484 each bind L-methionine; that span reads IGS. 5-methyltetrahydropteroyltri-L-glutamate contacts are provided by residues 515-516 and W561; that span reads RC. Position 599 (D599) interacts with L-homocysteine. D599 lines the L-methionine pocket. E605 is a 5-methyltetrahydropteroyltri-L-glutamate binding site. The Zn(2+) site is built by H641, C643, and E665. H694 serves as the catalytic Proton donor. Position 726 (C726) interacts with Zn(2+).

The protein belongs to the vitamin-B12 independent methionine synthase family. It depends on Zn(2+) as a cofactor.

The enzyme catalyses 5-methyltetrahydropteroyltri-L-glutamate + L-homocysteine = tetrahydropteroyltri-L-glutamate + L-methionine. The protein operates within amino-acid biosynthesis; L-methionine biosynthesis via de novo pathway; L-methionine from L-homocysteine (MetE route): step 1/1. Functionally, catalyzes the transfer of a methyl group from 5-methyltetrahydrofolate to homocysteine resulting in methionine formation. This chain is 5-methyltetrahydropteroyltriglutamate--homocysteine methyltransferase, found in Salmonella dublin (strain CT_02021853).